The primary structure comprises 170 residues: Co-chaperone protein HscB homolog (170 aa).

The J domain occupies 5-79; the sequence is DHFSLFGLPA…RARYLCEQAG (75 aa).

The protein belongs to the HscB family. Interacts with HscA and stimulates its ATPase activity.

Co-chaperone involved in the maturation of iron-sulfur cluster-containing proteins. Seems to help targeting proteins to be folded toward HscA. The chain is Co-chaperone protein HscB homolog from Bordetella parapertussis (strain 12822 / ATCC BAA-587 / NCTC 13253).